The primary structure comprises 357 residues: Dual-specificity RNA methyltransferase RlmN (357 aa).

Residue glutamate 89 is the Proton acceptor of the active site. A Radical SAM core domain is found at 109–340; sequence EGEKYTVCVS…CTIRESKALD (232 aa). Cysteine 116 and cysteine 345 form a disulfide bridge. The [4Fe-4S] cluster site is built by cysteine 123, cysteine 127, and cysteine 130. S-adenosyl-L-methionine contacts are provided by residues 173 to 174, serine 203, 226 to 228, and asparagine 302; these read GE and SLH. Cysteine 345 (S-methylcysteine intermediate) is an active-site residue.

This sequence belongs to the radical SAM superfamily. RlmN family. The cofactor is [4Fe-4S] cluster.

The protein resides in the cytoplasm. It catalyses the reaction adenosine(2503) in 23S rRNA + 2 reduced [2Fe-2S]-[ferredoxin] + 2 S-adenosyl-L-methionine = 2-methyladenosine(2503) in 23S rRNA + 5'-deoxyadenosine + L-methionine + 2 oxidized [2Fe-2S]-[ferredoxin] + S-adenosyl-L-homocysteine. It carries out the reaction adenosine(37) in tRNA + 2 reduced [2Fe-2S]-[ferredoxin] + 2 S-adenosyl-L-methionine = 2-methyladenosine(37) in tRNA + 5'-deoxyadenosine + L-methionine + 2 oxidized [2Fe-2S]-[ferredoxin] + S-adenosyl-L-homocysteine. Functionally, specifically methylates position 2 of adenine 2503 in 23S rRNA and position 2 of adenine 37 in tRNAs. m2A2503 modification seems to play a crucial role in the proofreading step occurring at the peptidyl transferase center and thus would serve to optimize ribosomal fidelity. In Helicobacter pylori (strain P12), this protein is Dual-specificity RNA methyltransferase RlmN.